A 438-amino-acid polypeptide reads, in one-letter code: sn-glycerol-3-phosphate-binding periplasmic protein UgpB (438 aa).

The first 23 residues, 1-23 (MKPLHYTASALALGLALMGNAQA), serve as a signal peptide directing secretion. Sn-glycerol 3-phosphate-binding residues include tyrosine 65, glutamate 89, serine 144, serine 270, glycine 307, tyrosine 346, and arginine 397.

The protein belongs to the bacterial solute-binding protein 1 family. The complex is composed of two ATP-binding proteins (UgpC), two transmembrane proteins (UgpA and UgpE) and a solute-binding protein (UgpB).

It is found in the periplasm. In terms of biological role, part of the ABC transporter complex UgpBAEC involved in sn-glycerol-3-phosphate (G3P) import. Binds G3P. The chain is sn-glycerol-3-phosphate-binding periplasmic protein UgpB (ugpB) from Escherichia coli O157:H7.